The following is a 435-amino-acid chain: Xylose isomerase (435 aa).

Catalysis depends on residues His-100 and Asp-103. 7 residues coordinate Mg(2+): Glu-231, Glu-267, His-270, Asp-295, Asp-306, Asp-308, and Asp-338.

Belongs to the xylose isomerase family. As to quaternary structure, homotetramer. It depends on Mg(2+) as a cofactor.

It localises to the cytoplasm. It carries out the reaction alpha-D-xylose = alpha-D-xylulofuranose. The sequence is that of Xylose isomerase from Brucella suis (strain ATCC 23445 / NCTC 10510).